Here is a 437-residue protein sequence, read N- to C-terminus: Amino-acid acetyltransferase (437 aa).

Positions 289–437 constitute an N-acetyltransferase domain; it reads ECIRLATSFD…SKVLMLALDN (149 aa).

It belongs to the acetyltransferase family. ArgA subfamily.

The protein resides in the cytoplasm. The catalysed reaction is L-glutamate + acetyl-CoA = N-acetyl-L-glutamate + CoA + H(+). Its pathway is amino-acid biosynthesis; L-arginine biosynthesis; N(2)-acetyl-L-ornithine from L-glutamate: step 1/4. The chain is Amino-acid acetyltransferase from Haemophilus ducreyi (strain 35000HP / ATCC 700724).